The following is a 564-amino-acid chain: Dihydroxy-acid dehydratase (564 aa).

Asp80 is a Mg(2+) binding site. Position 121 (Cys121) interacts with [2Fe-2S] cluster. Mg(2+) contacts are provided by Asp122 and Lys123. N6-carboxylysine is present on Lys123. Residue Cys194 participates in [2Fe-2S] cluster binding. Glu447 serves as a coordination point for Mg(2+). Ser473 acts as the Proton acceptor in catalysis.

It belongs to the IlvD/Edd family. Homodimer. It depends on [2Fe-2S] cluster as a cofactor. Mg(2+) serves as cofactor.

It catalyses the reaction (2R)-2,3-dihydroxy-3-methylbutanoate = 3-methyl-2-oxobutanoate + H2O. The enzyme catalyses (2R,3R)-2,3-dihydroxy-3-methylpentanoate = (S)-3-methyl-2-oxopentanoate + H2O. It functions in the pathway amino-acid biosynthesis; L-isoleucine biosynthesis; L-isoleucine from 2-oxobutanoate: step 3/4. The protein operates within amino-acid biosynthesis; L-valine biosynthesis; L-valine from pyruvate: step 3/4. In terms of biological role, functions in the biosynthesis of branched-chain amino acids. Catalyzes the dehydration of (2R,3R)-2,3-dihydroxy-3-methylpentanoate (2,3-dihydroxy-3-methylvalerate) into 2-oxo-3-methylpentanoate (2-oxo-3-methylvalerate) and of (2R)-2,3-dihydroxy-3-methylbutanoate (2,3-dihydroxyisovalerate) into 2-oxo-3-methylbutanoate (2-oxoisovalerate), the penultimate precursor to L-isoleucine and L-valine, respectively. The polypeptide is Dihydroxy-acid dehydratase (Listeria monocytogenes serotype 4b (strain CLIP80459)).